The chain runs to 76 residues: MTLNEAIKDKVYEIVEIANCDEALKKRFLSFGIHEGVQCILLHYSMKKATLSVKINRIQVALRSHEAQYLVIKESV.

Belongs to the FeoA family.

In terms of biological role, might be involved in Fe(2+) ion uptake. This is Putative Fe(2+) transport protein A from Helicobacter pylori (strain ATCC 700392 / 26695) (Campylobacter pylori).